The primary structure comprises 176 residues: Protein Dr1 (176 aa).

N-acetylalanine is present on A2. A Histone-fold domain is found at 12–75 (TIPRAAINKM…ISPEHVIQAL (64 aa)). The short motif at 100-103 (KRRK) is the Nuclear localization signal element. 4 positions are modified to phosphoserine: S105, S106, S166, and S167. Residues 152–167 (QLAAASASASNQAGSS) show a composition bias toward low complexity. A disordered region spans residues 152 to 176 (QLAAASASASNQAGSSQDEEDDDDI).

The protein belongs to the NC2 beta/DR1 family. Heterodimer with DRAP1. DR1 exists in solution as a homotetramer that dissociates during interaction with TBP and then, after complexing with TBP, reassociates at a slow rate, to reconstitute the tetramer. Interacts with NFIL3. Component of the ADA2A-containing complex (ATAC), composed of KAT14, KAT2A, TADA2L, TADA3L, ZZ3, MBIP, WDR5, YEATS2, CCDC101 and DR1. Post-translationally, phosphorylation regulates its interaction with TBP. Not phosphorylated when bound to DRAP1.

Its subcellular location is the nucleus. Functionally, the association of the DR1/DRAP1 heterodimer with TBP results in a functional repression of both activated and basal transcription of class II genes. This interaction precludes the formation of a transcription-competent complex by inhibiting the association of TFIIA and/or TFIIB with TBP. Can bind to DNA on its own. Component of the ATAC complex, a complex with histone acetyltransferase activity on histones H3 and H4. In Homo sapiens (Human), this protein is Protein Dr1 (DR1).